The primary structure comprises 159 residues: NADH-quinone oxidoreductase subunit B 2 (159 aa).

Residues Cys-37, Cys-38, Cys-102, and Cys-132 each contribute to the [4Fe-4S] cluster site.

This sequence belongs to the complex I 20 kDa subunit family. As to quaternary structure, NDH-1 is composed of 14 different subunits. Subunits NuoB, C, D, E, F, and G constitute the peripheral sector of the complex. [4Fe-4S] cluster is required as a cofactor.

It is found in the cell inner membrane. It carries out the reaction a quinone + NADH + 5 H(+)(in) = a quinol + NAD(+) + 4 H(+)(out). In terms of biological role, NDH-1 shuttles electrons from NADH, via FMN and iron-sulfur (Fe-S) centers, to quinones in the respiratory chain. Couples the redox reaction to proton translocation (for every two electrons transferred, four hydrogen ions are translocated across the cytoplasmic membrane), and thus conserves the redox energy in a proton gradient. The chain is NADH-quinone oxidoreductase subunit B 2 from Azoarcus sp. (strain BH72).